The sequence spans 420 residues: MVLSRGETKKNSVRLTAKQEKKPQSTFQTLKQSLKLSNNKKLKQDSTQHSNDTNKSVKAKKNGTSSKKTGTQRKRISTQRFSLFTYGNVQVMNSFVPIHNDIPNSSCIRRNSQVSANNVTESSGVFFNDTQSQDSQNTIKLKPTSLMAKGPIEIYQICTGFDKLKENIAPFQKSSKASSHDGHVVNYLSIGRHGDIVHPVLPKLQITRLNGAGFKYFISFYNPERYWEIEFLPLISQSQSELENSVKAFENVISKICQFSHINEGATIGNNESLSDKFKLPPTSDIEPPNTEIINNDDDDDDDDDNYDDDDLNYLLDEEYEQGCTDNSFSVISNTCSNLNASFLYPSDPTDAVSISINEAFKNAIRRTAPVLNIPIAAPSIHSKQQNKRYSSYPFIDSPPYLQDRHRRFQRRSISGLGDL.

A compositionally biased stretch (basic and acidic residues) spans 1–10; it reads MVLSRGETKK. Disordered regions lie at residues 1–75 and 273–309; these read MVLS…QRKR and SLSD…NYDD. Low complexity predominate over residues 30 to 39; the sequence is LKQSLKLSNN. Residues 45–56 show a composition bias toward polar residues; the sequence is DSTQHSNDTNKS. At S273 the chain carries Phosphoserine. Residues 295 to 309 show a composition bias toward acidic residues; sequence NNDDDDDDDDDNYDD.

This sequence belongs to the INP1 family.

The protein localises to the peroxisome membrane. In terms of biological role, required for peroxisome inheritance. This chain is Inheritance of peroxisomes protein 1 (INP1), found in Saccharomyces cerevisiae (strain YJM789) (Baker's yeast).